The primary structure comprises 541 residues: Malate synthase (541 aa).

The Proton acceptor role is filled by R172. D452 acts as the Proton donor in catalysis.

The protein belongs to the malate synthase family.

Its subcellular location is the cytoplasm. The enzyme catalyses glyoxylate + acetyl-CoA + H2O = (S)-malate + CoA + H(+). It functions in the pathway carbohydrate metabolism; glyoxylate cycle; (S)-malate from isocitrate: step 2/2. The sequence is that of Malate synthase (mls) from Myxococcus xanthus (strain DK1622).